Here is a 442-residue protein sequence, read N- to C-terminus: MENAKMNSLIAQYPLVKDLVALKETTWFNPGTTSLAEGLPYVGLTEQDVQDAHARLSRFAPYLAKAFPETAATGGIIESELVAIPAMQKRLEKEYQQPISGQLLLKKDSHLPISGSIKARGGIYEVLAHAEKLALEAGLLTLEDDYSKLLSPEFKQFFSQYSIAVGSTGNLGLSIGIMSARIGFKVTVHMSADARAWKKAKLRSHGVTVVEYEQDYGVAVEEGRKAAQSDPNCFFIDDENSRTLFLGYSVAGQRLKAQFAQQGRIVDADNPLFVYLPCGVGGGPGGVAFGLKLAFGDHVHCFFAEPTHSPCMLLGVHTGLHDQISVQDIGIDNLTAADGLAVGRASGFVGRAMERLLDGFYTLSDQTMYDMLGWLAQEEGIRLEPSALAGMAGPQRVCASVSYQQMHGFSAEQLRNATHLVWATGGGMVPEEEMEQYLAKGH.

The residue at position 118 (Lys-118) is an N6-(pyridoxal phosphate)lysine.

The protein belongs to the serine/threonine dehydratase family. DsdA subfamily. Monomer. Pyridoxal 5'-phosphate is required as a cofactor.

It catalyses the reaction D-serine = pyruvate + NH4(+). This Escherichia coli O6:K15:H31 (strain 536 / UPEC) protein is D-serine dehydratase 2.